The following is a 410-amino-acid chain: MSSDPNFSLISFLECLNEIEHEFLRDKGENYPVLVRKLRELQQKIPNDIANLPRDPETIQQIHQTTHRIRAVAQAFIRFDQKFVSLCSEVVHGTSKVMQEFNVVSPDVGCRNLSEDLPAYHMRKHFLLTLDNPYPTQEEKETLVRLTNESTARVGQSSVNRPPLEVHQLTLWFINARRRSGWSHILKKFAREDRSRMKHLVRAKLSSSNQSTPPSSTSDSLSNNLDDVLSDNLGRPLTPVDKQQFEDDWASMISWIKYGVKEKVGDWVYDLCAASKKTPKPGMPRPVTTVAKRHPARKTKPAAKPKSRTANPRASTTPSIDSTLDSSKLESTPELSMCSTADTSFSTFGSSLSMSHYNPFQDGNDILQSPTVKARGNRKVKALPKRAGKQQPDEVDNGKIPFLCLSVAFV.

A variable domain between B alleles region spans residues 1-110 (MSSDPNFSLI…FNVVSPDVGC (110 aa)). Residues 107–184 (DVGCRNLSED…NARRRSGWSH (78 aa)) constitute a DNA-binding region (homeobox; TALE-type). The highly conserved between B alleles stretch occupies residues 111–410 (RNLSEDLPAY…PFLCLSVAFV (300 aa)). Disordered stretches follow at residues 202–239 (RAKL…PLTP), 278–335 (TPKP…TPEL), and 374–395 (ARGN…PDEV). Residues 205 to 233 (LSSSNQSTPPSSTSDSLSNNLDDVLSDNL) are compositionally biased toward low complexity. Residues 276 to 308 (KKTPKPGMPRPVTTVAKRHPARKTKPAAKPKSR) carry the Nuclear localization signal motif. Positions 291 to 307 (AKRHPARKTKPAAKPKS) are enriched in basic residues. Positions 312-335 (PRASTTPSIDSTLDSSKLESTPEL) are enriched in polar residues. The not essential for B1 function stretch occupies residues 333–410 (PELSMCSTAD…PFLCLSVAFV (78 aa)). Residues 375-388 (RGNRKVKALPKRAG) show a composition bias toward basic residues.

It belongs to the TALE/M-ATYP homeobox family.

It is found in the nucleus. In terms of biological role, the B locus has at least 25 alleles, and any combination of two different B alleles yields a multimeric regulatory protein, that activates genes responsible for the pathogenicity and for the sexual development of the fungus within the corn plant. This Mycosarcoma maydis (Corn smut fungus) protein is Mating-type locus allele B1 protein.